Consider the following 166-residue polypeptide: HTH-type transcriptional regulator PetP (166 aa).

The HTH marR-type domain occupies 17–152; the sequence is DEQLRKGIEA…FRQVLEAMMD (136 aa). Positions 66–89 form a DNA-binding region, H-T-H motif; it reads VTTLISVLGVTKQSLNRVLRTLID.

Functionally, necessary for photosynthetic and respiratory growth. The protein is HTH-type transcriptional regulator PetP (petP) of Rhodobacter capsulatus (strain ATCC BAA-309 / NBRC 16581 / SB1003).